The chain runs to 414 residues: Zinc metalloproteinase nas-26 (414 aa).

The N-terminal stretch at 1–20 (MTSSLVLILAPLALVAIGEA) is a signal peptide. Positions 21 to 61 (AFGNSSKIFEIPGLEVMASDKYPHFTTIETVSRTKVHRHRR) are excised as a propeptide. An N-linked (GlcNAc...) asparagine glycan is attached at Asn24. A Peptidase M12A domain is found at 62–264 (EVIAGQIYDW…AKVINDIYCP (203 aa)). 6 disulfide bridges follow: Cys103–Cys263, Cys126–Cys146, Cys267–Cys286, Cys289–Cys300, Cys308–Cys331, and Cys358–Cys378. His154 is a binding site for Zn(2+). Residue Glu155 is part of the active site. The Zn(2+) site is built by His158 and His164. The EGF-like domain maps to 251-307 (AFLDAKVINDIYCPNACQGRNHLNCLAGGYPDPNNCNVCRCPEGLGGPDCGRLQPSP). Residues 308-414 (CGGEIHASDQ…RFSLRFRRQA (107 aa)) enclose the CUB domain.

The cofactor is Zn(2+).

The protein resides in the secreted. Metalloprotease. This Caenorhabditis elegans protein is Zinc metalloproteinase nas-26 (toh-1).